A 93-amino-acid polypeptide reads, in one-letter code: YcgL domain-containing protein Spea_2443 (93 aa).

The 85-residue stretch at 1 to 85 folds into the YcgL domain; that stretch reads MICAVYKSLR…PVVNLLEQHK (85 aa).

The protein is YcgL domain-containing protein Spea_2443 of Shewanella pealeana (strain ATCC 700345 / ANG-SQ1).